Reading from the N-terminus, the 725-residue chain is Ribosomal RNA large subunit methyltransferase K/L (725 aa).

Residues 46–157 (VAYRLCLWSR…RGEAVLSLDL (112 aa)) form the THUMP domain.

Belongs to the methyltransferase superfamily. RlmKL family.

It is found in the cytoplasm. The enzyme catalyses guanosine(2445) in 23S rRNA + S-adenosyl-L-methionine = N(2)-methylguanosine(2445) in 23S rRNA + S-adenosyl-L-homocysteine + H(+). It carries out the reaction guanosine(2069) in 23S rRNA + S-adenosyl-L-methionine = N(2)-methylguanosine(2069) in 23S rRNA + S-adenosyl-L-homocysteine + H(+). Specifically methylates the guanine in position 2445 (m2G2445) and the guanine in position 2069 (m7G2069) of 23S rRNA. In Ectopseudomonas mendocina (strain ymp) (Pseudomonas mendocina), this protein is Ribosomal RNA large subunit methyltransferase K/L.